Consider the following 176-residue polypeptide: Large ribosomal subunit protein uL10 (176 aa).

This sequence belongs to the universal ribosomal protein uL10 family. Part of the ribosomal stalk of the 50S ribosomal subunit. The N-terminus interacts with L11 and the large rRNA to form the base of the stalk. The C-terminus forms an elongated spine to which L12 dimers bind in a sequential fashion forming a multimeric L10(L12)X complex.

In terms of biological role, forms part of the ribosomal stalk, playing a central role in the interaction of the ribosome with GTP-bound translation factors. This chain is Large ribosomal subunit protein uL10, found in Leuconostoc citreum (strain KM20).